Here is a 96-residue protein sequence, read N- to C-terminus: Large ribosomal subunit protein eL43 (96 aa).

Residues 41–62 form a C4-type zinc finger; sequence CPVCGFMKLKRISTSIWECKKC.

Belongs to the eukaryotic ribosomal protein eL43 family. Zn(2+) serves as cofactor.

The polypeptide is Large ribosomal subunit protein eL43 (Methanococcus aeolicus (strain ATCC BAA-1280 / DSM 17508 / OCM 812 / Nankai-3)).